The chain runs to 349 residues: S-adenosylmethionine:tRNA ribosyltransferase-isomerase (349 aa).

It belongs to the QueA family. As to quaternary structure, monomer.

Its subcellular location is the cytoplasm. The catalysed reaction is 7-aminomethyl-7-carbaguanosine(34) in tRNA + S-adenosyl-L-methionine = epoxyqueuosine(34) in tRNA + adenine + L-methionine + 2 H(+). Its pathway is tRNA modification; tRNA-queuosine biosynthesis. Transfers and isomerizes the ribose moiety from AdoMet to the 7-aminomethyl group of 7-deazaguanine (preQ1-tRNA) to give epoxyqueuosine (oQ-tRNA). This chain is S-adenosylmethionine:tRNA ribosyltransferase-isomerase, found in Cupriavidus pinatubonensis (strain JMP 134 / LMG 1197) (Cupriavidus necator (strain JMP 134)).